The chain runs to 436 residues: Histidine--tRNA ligase (436 aa).

The protein belongs to the class-II aminoacyl-tRNA synthetase family.

Its subcellular location is the cytoplasm. It carries out the reaction tRNA(His) + L-histidine + ATP = L-histidyl-tRNA(His) + AMP + diphosphate + H(+). This is Histidine--tRNA ligase from Thermococcus kodakarensis (strain ATCC BAA-918 / JCM 12380 / KOD1) (Pyrococcus kodakaraensis (strain KOD1)).